The sequence spans 263 residues: Undecaprenyl-diphosphatase 2 (263 aa).

8 helical membrane passes run 17-37, 42-62, 83-103, 106-126, 142-162, 183-203, 216-236, and 242-262; these read TEFL…LIGF, AKVF…VIFW, LHII…HSAI, VLFG…LMIV, ITYK…WPGF, AEYT…LDLI, LFAT…VSFL, and VKLT…YFFI.

Belongs to the UppP family.

The protein localises to the cell membrane. It catalyses the reaction di-trans,octa-cis-undecaprenyl diphosphate + H2O = di-trans,octa-cis-undecaprenyl phosphate + phosphate + H(+). Functionally, catalyzes the dephosphorylation of undecaprenyl diphosphate (UPP). Confers resistance to bacitracin. This chain is Undecaprenyl-diphosphatase 2, found in Bacillus anthracis.